A 181-amino-acid polypeptide reads, in one-letter code: Adenylate kinase (181 aa).

An ATP-binding site is contributed by 10–15 (GAGKGT). Residues 30 to 59 (STGDLFRANIGEGTPLGKEAKSYIDAGKLV) are NMP. Residues Thr31, Arg36, 57 to 59 (KLV), 85 to 88 (GFPR), and Gln92 contribute to the AMP site. The interval 126-132 (ARGRADD) is LID. Arg127 lines the ATP pocket. Residues Arg129 and Arg140 each contribute to the AMP site. Residue Gly166 participates in ATP binding.

This sequence belongs to the adenylate kinase family. As to quaternary structure, monomer.

The protein localises to the cytoplasm. The catalysed reaction is AMP + ATP = 2 ADP. The protein operates within purine metabolism; AMP biosynthesis via salvage pathway; AMP from ADP: step 1/1. In terms of biological role, catalyzes the reversible transfer of the terminal phosphate group between ATP and AMP. Plays an important role in cellular energy homeostasis and in adenine nucleotide metabolism. This chain is Adenylate kinase, found in Corynebacterium diphtheriae (strain ATCC 700971 / NCTC 13129 / Biotype gravis).